A 190-amino-acid polypeptide reads, in one-letter code: MTIAKIRCRLFIMKDKIIDAAIRRVPDFPKKGILFYDITGILVNPEVFSYCLDKMTEMYKDKKVDAVAAIEARGFIFAAPFAYKMGIPLILIRKKGKLPGETYSASYDLEYGQASVEVHKTDVVKGQKVLLLDDLIATGGTLNAARSILEEGGAKVVGFCGVVGLPFLNYSKVLGDLPVKTLIEYDSEKI.

This sequence belongs to the purine/pyrimidine phosphoribosyltransferase family. As to quaternary structure, homodimer.

The protein resides in the cytoplasm. It catalyses the reaction AMP + diphosphate = 5-phospho-alpha-D-ribose 1-diphosphate + adenine. Its pathway is purine metabolism; AMP biosynthesis via salvage pathway; AMP from adenine: step 1/1. Catalyzes a salvage reaction resulting in the formation of AMP, that is energically less costly than de novo synthesis. This Treponema denticola (strain ATCC 35405 / DSM 14222 / CIP 103919 / JCM 8153 / KCTC 15104) protein is Adenine phosphoribosyltransferase.